An 825-amino-acid chain; its full sequence is Zinc finger protein 28 (825 aa).

The interval 26–65 (RPGGGPAAGTVVAPGSPDRGRPRSRNSLASQDQQGAVTSG) is disordered. Low complexity predominate over residues 33–42 (AGTVVAPGSP). Over residues 51 to 65 (NSLASQDQQGAVTSG) the composition is skewed to polar residues. The region spanning 103–174 (VTFGDVAVVF…KRKMRKGQHL (72 aa)) is the KRAB domain. 14 C2H2-type zinc fingers span residues 377 to 399 (FQCN…QRIH), 405 to 427 (YKCN…QRCH), 433 to 456 (YECP…RYYH), 462 to 484 (FDCI…RRIH), 490 to 512 (YTCE…QRIH), 518 to 540 (YECE…QRVH), 546 to 568 (FKCK…WRIH), 574 to 596 (FECG…QRIH), 602 to 624 (YECK…QKTH), 630 to 652 (YECK…QRVH), 658 to 680 (YKCL…RRLH), 686 to 708 (YECV…RRCH), 714 to 736 (YECS…QRIH), and 742 to 764 (YECK…KRVH). The C2H2-type 15; degenerate zinc-finger motif lies at 770 to 792 (YNYKKGRRAFRQTAHFAHHQQIH).

The protein belongs to the krueppel C2H2-type zinc-finger protein family. In terms of tissue distribution, expressed predominantly in ovary.

It localises to the nucleus. Its function is as follows. May be involved in transcriptional regulation. May have a role in embryonic development. The protein is Zinc finger protein 28 (Zfp28) of Mus musculus (Mouse).